We begin with the raw amino-acid sequence, 298 residues long: Transcription factor BOA (298 aa).

Disordered regions lie at residues 1-26 (MGKE…EYRI), 79-143 (LRSS…KRPR), and 206-232 (EDPY…GGGS). The segment covering 10 to 20 (YGDDDGEDAGG) has biased composition (acidic residues). Residues 104–113 (DPKKQKKSDG) are compositionally biased toward basic and acidic residues. The segment covering 122–131 (STAEEGDSGP) has biased composition (acidic residues). The segment at residues 138–197 (TSKRPRLVWTPQLHKRFVDVVAHLGIKNAVPKTIMQLMNVEGLTRENVASHLQKYRLYLK) is a DNA-binding region (myb-like GARP). Polar residues predominate over residues 209 to 227 (YSSSDQLFSSTPVPPQSFQ).

The protein localises to the nucleus. Transcription factor that is a critical component of the regulatory circuit of the circadian clock. Binds to specific sites on CCA1 promoter leading to CCA1 activation. Is required for the rhythmic expression of other clock genes such as LHY, GI and APRR1/TOC1. The polypeptide is Transcription factor BOA (BOA) (Arabidopsis thaliana (Mouse-ear cress)).